Here is a 460-residue protein sequence, read N- to C-terminus: GTPase Der (460 aa).

EngA-type G domains follow at residues 2–164 (QSII…HEEF) and 196–368 (IRVG…ENFT). Residues 8–15 (GKPNVGKS), 55–59 (DSGGL), 116–119 (NKVD), 202–209 (GRVNVGKS), 249–253 (DTAGI), and 313–316 (NKWD) each bind GTP. The 85-residue stretch at 369 to 453 (QKIQTSKLNT…PLVIASRKKG (85 aa)) folds into the KH-like domain.

This sequence belongs to the TRAFAC class TrmE-Era-EngA-EngB-Septin-like GTPase superfamily. EngA (Der) GTPase family. As to quaternary structure, associates with the 50S ribosomal subunit.

Functionally, GTPase that plays an essential role in the late steps of ribosome biogenesis. The chain is GTPase Der from Campylobacter jejuni subsp. jejuni serotype O:23/36 (strain 81-176).